The sequence spans 594 residues: Insulin-like growth factor 2 mRNA-binding protein 3-A (594 aa).

RRM domains are found at residues 2 to 75 (NKLY…HSVP) and 81 to 156 (RKLQ…YIPD). Positions 161–177 (PQAPSQQLQQQPQQQHP) are enriched in low complexity. Residues 161-206 (PQAPSQQLQQQPQQQHPQGRRGFGQRGPARQGSPGAAARPKPQTEV) form a disordered region. 2 consecutive KH domains span residues 205–270 (EVPL…CKII) and 286–353 (EIPL…EEEI). A disordered region spans residues 392–415 (GMPPPSVGVPSPTSSTSYPPFGQQ). Positions 399 to 411 (GVPSPTSSTSYPP) are enriched in low complexity. KH domains follow at residues 418–483 (SETV…QGRI) and 500–566 (KLET…QRKI).

Belongs to the RRM IMP/VICKZ family. As to quaternary structure, homodimer and multimer. Associates with microtubules. Interaction with a translocation machinery protein TRAPA of the endoplasmic reticulum. Component of a mRNP complex, at least composed of DAZAP1, IGF2BP3, STAU and VgRBP60. The mRNP complex with DAZAP1, IGF2BP3, STAU and VgRBP60 is only found in the cytoplasm. Interacts with a hnRNP 1 related RNA transport protein VgRBP60 both in the nucleus (in a RNA-independent manner) and the cytoplasm (in a RNA-dependent manner). Found in a B3 activator complex.

Its subcellular location is the nucleus. The protein resides in the cytoplasm. The protein localises to the endoplasmic reticulum. Functionally, RNA-binding protein that acts as a regulator of mRNA transport and localization. Binds to the RNA sequence motif 5'-UUCAC-3'. Preferentially binds to N6-methyladenosine (m6A)-containing mRNAs and increases their stability. Mediates the specific association of Vg1 RNA to microtubules. Binds specifically to the vegetal localization elements (VLE or VgLE) in the 3'-UTR of Vg1 and VegT mRNAs. Binds to the Vg1 and VegT mRNAs in both the nucleus and the cytoplasm. May regulate mRNA translation. Acts as a transcription regulator. Binds to the 5'-[TA]GGTTACT-3' motif within element 3 of the TFIIIA gene promoter. In Xenopus laevis (African clawed frog), this protein is Insulin-like growth factor 2 mRNA-binding protein 3-A (igf2bp3-a).